The sequence spans 172 residues: Bifunctional protein PyrR (172 aa).

The short motif at 90–102 is the PRPP-binding element; sequence LVLIDDVLMSGRT.

It belongs to the purine/pyrimidine phosphoribosyltransferase family. PyrR subfamily.

The enzyme catalyses UMP + diphosphate = 5-phospho-alpha-D-ribose 1-diphosphate + uracil. In terms of biological role, regulates the transcription of the pyrimidine nucleotide (pyr) operon in response to exogenous pyrimidines. Its function is as follows. Also displays a weak uracil phosphoribosyltransferase activity which is not physiologically significant. The sequence is that of Bifunctional protein PyrR from Pseudomonas putida (strain W619).